We begin with the raw amino-acid sequence, 224 residues long: Small ribosomal subunit protein uS3 (224 aa).

The region spanning 39-107 (IREFLKKKPS…DVWVEIAEVK (69 aa)) is the KH type-2 domain.

Belongs to the universal ribosomal protein uS3 family. In terms of assembly, part of the 30S ribosomal subunit. Forms a tight complex with proteins S10 and S14.

Binds the lower part of the 30S subunit head. Binds mRNA in the 70S ribosome, positioning it for translation. This chain is Small ribosomal subunit protein uS3, found in Chlamydia trachomatis serovar A (strain ATCC VR-571B / DSM 19440 / HAR-13).